The sequence spans 788 residues: Response regulator SSK1 (788 aa).

The Response regulatory domain maps to 534-691 (NVLIVEDNII…WLERKVKEWG (158 aa)). Asp-583 is modified (4-aspartylphosphate).

The protein belongs to the SSK1 family.

It localises to the cytoplasm. Its function is as follows. Two-domain response regulator protein in the two-component signal transduction system of the HOG1 pathway. Controls high-osmolarity adaptation and fungicide sensitivity via its regulation of the phosphorylation of HOG1. The chain is Response regulator SSK1 from Cochliobolus heterostrophus (strain C5 / ATCC 48332 / race O) (Southern corn leaf blight fungus).